An 896-amino-acid polypeptide reads, in one-letter code: DNA double-strand break repair Rad50 ATPase (896 aa).

ATP contacts are provided by residues 32-38 and Gln-137; that span reads NGAGKSS. Coiled-coil stretches lie at residues 200–274, 412–505, 580–611, 636–669, and 702–731; these read RRYQ…KLQE, EEIR…LISM, IGDI…ESEF, IKLA…IQKR, and RSKV…RMKK. Residues 411–507 enclose the Zinc-hook domain; sequence YEEIRRDIDE…KKRQLISMES (97 aa). Zn(2+) contacts are provided by Cys-455 and Cys-458.

This sequence belongs to the SMC family. RAD50 subfamily. In terms of assembly, homodimer. Forms a heterotetramer composed of two Mre11 subunits and two Rad50 subunits. The cofactor is Zn(2+).

Functionally, part of the Rad50/Mre11 complex, which is involved in the early steps of DNA double-strand break (DSB) repair. The complex may facilitate opening of the processed DNA ends to aid in the recruitment of HerA and NurA. Rad50 controls the balance between DNA end bridging and DNA resection via ATP-dependent structural rearrangements of the Rad50/Mre11 complex. In Thermoplasma acidophilum (strain ATCC 25905 / DSM 1728 / JCM 9062 / NBRC 15155 / AMRC-C165), this protein is DNA double-strand break repair Rad50 ATPase.